We begin with the raw amino-acid sequence, 99 residues long: High mobility group nucleosome-binding domain-containing protein 3 (99 aa).

Composition is skewed to basic and acidic residues over residues 1–25 (MPKRKSPENTEDKDGSKVTKQEPTR), 39–53 (PEPKPRKTSAKKEPG), and 62–72 (GKKEEKQEAGK). Residues 1–99 (MPKRKSPENT…KTESVDNEGE (99 aa)) form a disordered region. Position 6 is a phosphoserine (Ser6). Thr10 bears the Phosphothreonine mark. 2 positions are modified to phosphoserine: Ser78 and Ser93. Positions 81–93 (GETKAEEAQKTES) are enriched in basic and acidic residues.

Belongs to the HMGN family. In terms of assembly, interacts with the ligand binding domain of the thyroid receptor (TR) (in vitro). Requires the presence of thyroid hormone for its interaction. Interacts with transcriptional regulator SEHBP. Interacts with nucleosomes.

Its subcellular location is the nucleus. In terms of biological role, binds to nucleosomes, regulating chromatin structure and consequently, chromatin-dependent processes such as transcription, DNA replication and DNA repair. Affects both insulin and glucagon levels and modulates the expression of pancreatic genes involved in insulin secretion. Regulates the expression of the glucose transporter SLC2A2 by binding specifically to its promoter region and recruiting PDX1 and additional transcription factors. Regulates the expression of SLC6A9, a glycine transporter which regulates the glycine concentration in synaptic junctions in the central nervous system, by binding to its transcription start site. May play a role in ocular development and astrocyte function. The protein is High mobility group nucleosome-binding domain-containing protein 3 (HMGN3) of Pongo abelii (Sumatran orangutan).